A 326-amino-acid polypeptide reads, in one-letter code: Vitamin B12 import system permease protein BtuC (326 aa).

Residues 1-10 (MLTLARQQQR) lie on the Cytoplasmic side of the membrane. The chain crosses the membrane as a helical span at residues 11–35 (QNIRWLLCLSVLMLLALLLSLCAGE). The Periplasmic portion of the chain corresponds to 36–56 (QWISPGDWFSPRGELFVWQIR). A helical transmembrane segment spans residues 57-81 (LPRTLAVLLVGAALAISGAVMQALF). The Cytoplasmic segment spans residues 82 to 92 (ENPLAEPGLLG). Residues 93–107 (VSNGAGVGLIAAVLL) form a helical membrane-spanning segment. The Periplasmic segment spans residues 108 to 113 (GQGQLP). The helical transmembrane segment at 114-138 (NWALGLCAIAGALIITLILLRFARR) threads the bilayer. The Cytoplasmic segment spans residues 139-141 (HLS). A helical transmembrane segment spans residues 142–166 (TSRLLLAGVALGIICSALMTWAIYF). Residues 167–190 (STSVDLRQLMYWMMGGFGGVDWRQ) lie on the Periplasmic side of the membrane. The helical transmembrane segment at 191–206 (SWLMLALIPMLLWICC) threads the bilayer. Topologically, residues 207-228 (QSRPMNMLALGEISARQLGLPL) are cytoplasmic. Residues 229–249 (WFWRNVLVAATGWMVGVSVAL) form a helical membrane-spanning segment. Over 250-257 (AGAIGFIG) the chain is Periplasmic. The helical transmembrane segment at 258–267 (LVIPHILRLC) threads the bilayer. Topologically, residues 268–274 (GLTDHRA) are cytoplasmic. A helical membrane pass occupies residues 275–296 (LLPGCALAGASALLLADIVARL). The Periplasmic segment spans residues 297-304 (ALAAAELP). The helical transmembrane segment at 305–324 (IGVVTATLGAPVFIWLLLKA) threads the bilayer. Residues 325 to 326 (GR) are Cytoplasmic-facing.

Belongs to the binding-protein-dependent transport system permease family. FecCD subfamily. As to quaternary structure, the complex is composed of two ATP-binding proteins (BtuD), two transmembrane proteins (BtuC) and a solute-binding protein (BtuF).

It localises to the cell inner membrane. Functionally, part of the ABC transporter complex BtuCDF involved in vitamin B12 import. Involved in the translocation of the substrate across the membrane. This is Vitamin B12 import system permease protein BtuC (btuC) from Escherichia coli O157:H7.